A 343-amino-acid chain; its full sequence is UDP-3-O-acylglucosamine N-acyltransferase (343 aa).

Residue His-245 is the Proton acceptor of the active site.

Belongs to the transferase hexapeptide repeat family. LpxD subfamily. Homotrimer.

The enzyme catalyses a UDP-3-O-[(3R)-3-hydroxyacyl]-alpha-D-glucosamine + a (3R)-hydroxyacyl-[ACP] = a UDP-2-N,3-O-bis[(3R)-3-hydroxyacyl]-alpha-D-glucosamine + holo-[ACP] + H(+). It participates in bacterial outer membrane biogenesis; LPS lipid A biosynthesis. Functionally, catalyzes the N-acylation of UDP-3-O-acylglucosamine using 3-hydroxyacyl-ACP as the acyl donor. Is involved in the biosynthesis of lipid A, a phosphorylated glycolipid that anchors the lipopolysaccharide to the outer membrane of the cell. This Phenylobacterium zucineum (strain HLK1) protein is UDP-3-O-acylglucosamine N-acyltransferase.